A 1204-amino-acid polypeptide reads, in one-letter code: ATP-dependent helicase/nuclease subunit A (1204 aa).

In terms of domain architecture, UvrD-like helicase ATP-binding spans Thr2 to Thr469. An ATP-binding site is contributed by Ala23–Thr30. One can recognise a UvrD-like helicase C-terminal domain in the interval Gly497 to Gly784.

The protein belongs to the helicase family. AddA subfamily. Heterodimer of AddA and AddB/RexB. Mg(2+) serves as cofactor.

The enzyme catalyses Couples ATP hydrolysis with the unwinding of duplex DNA by translocating in the 3'-5' direction.. It catalyses the reaction ATP + H2O = ADP + phosphate + H(+). Its function is as follows. The heterodimer acts as both an ATP-dependent DNA helicase and an ATP-dependent, dual-direction single-stranded exonuclease. Recognizes the chi site generating a DNA molecule suitable for the initiation of homologous recombination. The AddA nuclease domain is required for chi fragment generation; this subunit has the helicase and 3' -&gt; 5' nuclease activities. This chain is ATP-dependent helicase/nuclease subunit A, found in Lactobacillus gasseri (strain ATCC 33323 / DSM 20243 / BCRC 14619 / CIP 102991 / JCM 1131 / KCTC 3163 / NCIMB 11718 / NCTC 13722 / AM63).